Consider the following 721-residue polypeptide: Polyphosphate kinase (721 aa).

Asparagine 47 lines the ATP pocket. Mg(2+)-binding residues include arginine 377 and arginine 407. Histidine 437 acts as the Phosphohistidine intermediate in catalysis. Residues tyrosine 471, arginine 567, and histidine 595 each contribute to the ATP site.

It belongs to the polyphosphate kinase 1 (PPK1) family. The cofactor is Mg(2+). Post-translationally, an intermediate of this reaction is the autophosphorylated ppk in which a phosphate is covalently linked to a histidine residue through a N-P bond.

It carries out the reaction [phosphate](n) + ATP = [phosphate](n+1) + ADP. Catalyzes the reversible transfer of the terminal phosphate of ATP to form a long-chain polyphosphate (polyP). This Exiguobacterium sp. (strain ATCC BAA-1283 / AT1b) protein is Polyphosphate kinase.